The following is a 178-amino-acid chain: Relaxin-like protein SQ10 (178 aa).

A signal peptide spans 1–20 (MPALLFYLLGFCLLQGQVTG). 3 disulfide bridges follow: C34–C165, C46–C178, and C164–C169. Positions 54–150 (ESPSPENPFL…SSASESNTFS (97 aa)) are cleaved as a propeptide — connecting peptide.

Belongs to the insulin family. In terms of assembly, heterodimer of a B chain and an A chain linked by two disulfide bonds.

It is found in the secreted. This chain is Relaxin-like protein SQ10, found in Oryctolagus cuniculus (Rabbit).